Reading from the N-terminus, the 137-residue chain is Phospholipase A2 homolog PLA2-03 (137 aa).

A signal peptide spans 1–16 (MRTLWIVAVLLVGVEG). 7 disulfide bridges follow: C42–C131, C44–C60, C59–C111, C65–C137, C66–C104, C73–C97, and C91–C102. The tract at residues 121–133 (KKYKIFPKFLCKK) is important for membrane-damaging activities in eukaryotes and bacteria; heparin-binding.

It belongs to the phospholipase A2 family. Group II subfamily. K49 sub-subfamily. As to expression, expressed by the venom gland.

It is found in the secreted. Snake venom phospholipase A2 homolog that lacks enzymatic activity. Is myotoxic and displays edema-inducing activities in mouse paw. A model of myotoxic mechanism has been proposed: an apo Lys49-PLA2 is activated by the entrance of a hydrophobic molecule (e.g. fatty acid) at the hydrophobic channel of the protein leading to a reorientation of a monomer. This reorientation causes a transition between 'inactive' to 'active' states, causing alignment of C-terminal and membrane-docking sites (MDoS) side-by-side and putting the membrane-disruption sites (MDiS) in the same plane, exposed to solvent and in a symmetric position for both monomers. The MDoS region stabilizes the toxin on membrane by the interaction of charged residues with phospholipid head groups. Subsequently, the MDiS region destabilizes the membrane with penetration of hydrophobic residues. This insertion causes a disorganization of the membrane, allowing an uncontrolled influx of ions (i.e. calcium and sodium), and eventually triggering irreversible intracellular alterations and cell death. The polypeptide is Phospholipase A2 homolog PLA2-03 (Ovophis okinavensis (Ryukyu Island pit viper)).